Here is a 304-residue protein sequence, read N- to C-terminus: Uricase (304 aa).

At alanine 2 the chain carries N-acetylalanine. 2 positions are modified to N6-acetyllysine; alternate: lysine 10 and lysine 23. Residues lysine 10 and lysine 23 each carry the N6-succinyllysine; alternate modification. Lysine 23 acts as the Charge relay system in catalysis. An N6-acetyllysine mark is found at lysine 27 and lysine 36. A phosphoserine mark is found at serine 39 and serine 63. Threonine 68 acts as the Charge relay system in catalysis. 2 residues coordinate urate: threonine 68 and aspartate 69. Lysine 118, lysine 122, and lysine 164 each carry N6-acetyllysine. Phenylalanine 170 lines the urate pocket. N6-acetyllysine is present on residues lysine 175 and lysine 185. Arginine 187 is a urate binding site. Lysine 221 and lysine 228 each carry N6-acetyllysine; alternate. N6-succinyllysine; alternate occurs at positions 221 and 228. Serine 232 is modified (phosphoserine). Residues valine 235, glutamine 236, and asparagine 262 each coordinate urate. Histidine 264 (charge relay system) is an active-site residue. Lysine 278 is modified (N6-acetyllysine). Tyrosine 289 bears the Phosphotyrosine mark. A Microbody targeting signal motif is present at residues 302 to 304 (SKL).

The protein belongs to the uricase family.

The protein localises to the peroxisome. It catalyses the reaction urate + O2 + H2O = 5-hydroxyisourate + H2O2. Its pathway is purine metabolism; urate degradation; (S)-allantoin from urate: step 1/3. Catalyzes the oxidation of uric acid to 5-hydroxyisourate, which is further processed to form (S)-allantoin. The chain is Uricase (UOX) from Canis lupus familiaris (Dog).